The sequence spans 220 residues: 7-cyano-7-deazaguanine synthase (220 aa).

10–20 (FSGGQDSTTCL) lines the ATP pocket. Zn(2+) is bound by residues C188, C197, C200, and C203.

It belongs to the QueC family. It depends on Zn(2+) as a cofactor.

The catalysed reaction is 7-carboxy-7-deazaguanine + NH4(+) + ATP = 7-cyano-7-deazaguanine + ADP + phosphate + H2O + H(+). Its pathway is purine metabolism; 7-cyano-7-deazaguanine biosynthesis. Catalyzes the ATP-dependent conversion of 7-carboxy-7-deazaguanine (CDG) to 7-cyano-7-deazaguanine (preQ(0)). The sequence is that of 7-cyano-7-deazaguanine synthase from Neisseria meningitidis serogroup C (strain 053442).